The primary structure comprises 302 residues: Bifunctional protein FolD (302 aa).

NADP(+)-binding positions include 171 to 173 (GRS), serine 196, and isoleucine 237.

It belongs to the tetrahydrofolate dehydrogenase/cyclohydrolase family. Homodimer.

It carries out the reaction (6R)-5,10-methylene-5,6,7,8-tetrahydrofolate + NADP(+) = (6R)-5,10-methenyltetrahydrofolate + NADPH. The enzyme catalyses (6R)-5,10-methenyltetrahydrofolate + H2O = (6R)-10-formyltetrahydrofolate + H(+). It functions in the pathway one-carbon metabolism; tetrahydrofolate interconversion. Functionally, catalyzes the oxidation of 5,10-methylenetetrahydrofolate to 5,10-methenyltetrahydrofolate and then the hydrolysis of 5,10-methenyltetrahydrofolate to 10-formyltetrahydrofolate. The protein is Bifunctional protein FolD of Sphingopyxis alaskensis (strain DSM 13593 / LMG 18877 / RB2256) (Sphingomonas alaskensis).